The primary structure comprises 418 residues: Vasopressin V1a receptor (418 aa).

The tract at residues 1–43 (MRLSAGPDAGPSGNSSPWWPLATGAGNTSREAEALGEGNGPPR) is disordered. At 1–52 (MRLSAGPDAGPSGNSSPWWPLATGAGNTSREAEALGEGNGPPRDVRNEELAK) the chain is on the extracellular side. Asn27 carries an N-linked (GlcNAc...) asparagine glycan. The chain crosses the membrane as a helical span at residues 53 to 76 (LEIAVLAVTFAVAVLGNSSVLLAL). Topologically, residues 77-88 (HRTPRKTSRMHL) are cytoplasmic. Residues 89 to 110 (FIRHLSLADLAVAFFQVLPQMC) form a helical membrane-spanning segment. Topologically, residues 111–125 (WDITYRFRGPDWLCR) are extracellular. The cysteines at positions 124 and 203 are disulfide-linked. A helical transmembrane segment spans residues 126 to 147 (VVKHLQVFGMFASAYMLVVMTA). At 148–168 (DRYIAVCHPLKTLQQPARRSR) the chain is on the cytoplasmic side. A helical transmembrane segment spans residues 169–190 (LMIAAAWVLSFVLSTPQYFVFS). The Extracellular segment spans residues 191–218 (MIEVNNVTKARDCWATFIQPWGSRAYVT). The N-linked (GlcNAc...) asparagine glycan is linked to Asn196. The chain crosses the membrane as a helical span at residues 219-239 (WMTGGIFVAPVVILGTCYGFI). Topologically, residues 240-293 (CYNIWCNVRGKTASRQSKGAEQAGVAFQKGFLLAPCVSSVKSISRAKIRTVKMT) are cytoplasmic. The helical transmembrane segment at 294–313 (FVIVTAYIVCWAPFFIIQMW) threads the bilayer. Topologically, residues 314–331 (SVWDPMSVWTESENPTIT) are extracellular. The helical transmembrane segment at 332-351 (ITALLGSLNSCCNPWIYMFF) threads the bilayer. Topologically, residues 352 to 418 (SGHLLQDCVQ…KSIKFIPVST (67 aa)) are cytoplasmic. S-palmitoyl cysteine attachment occurs at residues Cys365 and Cys366. The interval 377–410 (DTDSMSRRQTFYSNNRSPTNSTGMWKDSPKSSKS) is disordered. Positions 383-399 (RRQTFYSNNRSPTNSTG) are enriched in polar residues. Phosphoserine is present on Ser404.

The protein belongs to the G-protein coupled receptor 1 family. Vasopressin/oxytocin receptor subfamily.

It is found in the cell membrane. Its function is as follows. Receptor for arginine vasopressin. The activity of this receptor is mediated by G proteins which activate a phosphatidyl-inositol-calcium second messenger system. Has been involved in social behaviors, including affiliation and attachment. The protein is Vasopressin V1a receptor (AVPR1A) of Homo sapiens (Human).